Here is a 237-residue protein sequence, read N- to C-terminus: Phosphoribosylaminoimidazole-succinocarboxamide synthase (237 aa).

The protein belongs to the SAICAR synthetase family.

The enzyme catalyses 5-amino-1-(5-phospho-D-ribosyl)imidazole-4-carboxylate + L-aspartate + ATP = (2S)-2-[5-amino-1-(5-phospho-beta-D-ribosyl)imidazole-4-carboxamido]succinate + ADP + phosphate + 2 H(+). It participates in purine metabolism; IMP biosynthesis via de novo pathway; 5-amino-1-(5-phospho-D-ribosyl)imidazole-4-carboxamide from 5-amino-1-(5-phospho-D-ribosyl)imidazole-4-carboxylate: step 1/2. This is Phosphoribosylaminoimidazole-succinocarboxamide synthase from Pectobacterium atrosepticum (strain SCRI 1043 / ATCC BAA-672) (Erwinia carotovora subsp. atroseptica).